Here is a 109-residue protein sequence, read N- to C-terminus: Peptide chaperone MftB (109 aa).

This sequence belongs to the peptide chaperone MftB family. Interacts with MftA and MftC.

In terms of biological role, peptide chaperone involved in the biosynthesis of the enzyme cofactor mycofactocin (MFT). Binds MftA and MftC with high affinity, and is essential for MftC activity on MftA, likely via the formation of a ternary complex. The protein is Peptide chaperone MftB of Mycobacterium ulcerans (strain Agy99).